The sequence spans 226 residues: V-type proton ATPase subunit E (226 aa).

Belongs to the V-ATPase E subunit family. In terms of assembly, V-ATPase is a heteromultimeric enzyme composed of a peripheral catalytic V1 complex (components A to H) attached to an integral membrane V0 proton pore complex (components: a, c, c', c'' and d).

Its function is as follows. Subunit of the peripheral V1 complex of vacuolar ATPase essential for assembly or catalytic function. V-ATPase is responsible for acidifying a variety of intracellular compartments in eukaryotic cells. The chain is V-type proton ATPase subunit E (VATE) from Mesembryanthemum crystallinum (Common ice plant).